The primary structure comprises 315 residues: Methionyl-tRNA formyltransferase (315 aa).

Residue Ser-113–Pro-116 participates in (6S)-5,6,7,8-tetrahydrofolate binding.

It belongs to the Fmt family.

The catalysed reaction is L-methionyl-tRNA(fMet) + (6R)-10-formyltetrahydrofolate = N-formyl-L-methionyl-tRNA(fMet) + (6S)-5,6,7,8-tetrahydrofolate + H(+). Functionally, attaches a formyl group to the free amino group of methionyl-tRNA(fMet). The formyl group appears to play a dual role in the initiator identity of N-formylmethionyl-tRNA by promoting its recognition by IF2 and preventing the misappropriation of this tRNA by the elongation apparatus. This chain is Methionyl-tRNA formyltransferase, found in Salmonella dublin (strain CT_02021853).